The chain runs to 349 residues: Aldehyde reductase YahK (349 aa).

Residues cysteine 40, histidine 62, cysteine 93, cysteine 96, cysteine 99, cysteine 107, and cysteine 158 each coordinate Zn(2+).

The protein belongs to the zinc-containing alcohol dehydrogenase family. Zn(2+) serves as cofactor.

It carries out the reaction a primary alcohol + NADP(+) = an aldehyde + NADPH + H(+). In terms of biological role, catalyzes the reduction of a wide range of aldehydes into their corresponding alcohols. Has a strong preference for NADPH over NADH as the electron donor. Cannot use a ketone as substrate. Is a major source of NADPH-dependent aldehyde reductase activity in E.coli. The in vivo functions of YahK has yet to be determined. The protein is Aldehyde reductase YahK (yahK) of Escherichia coli (strain K12).